A 688-amino-acid chain; its full sequence is Translation initiation factor IF-2 (688 aa).

The span at 50-62 shows a compositional bias: basic and acidic residues; that stretch reads LLSGKEKSEKTKE. The disordered stretch occupies residues 50–95; that stretch reads LLSGKEKSEKTKEEDDEIETTAKNPIKESINNKKSNKRDDKKEKVN. A compositionally biased stretch (low complexity) spans 72–82; the sequence is KNPIKESINNK. A compositionally biased stretch (basic and acidic residues) spans 86 to 95; sequence KRDDKKEKVN. In terms of domain architecture, tr-type G spans 187–354; that stretch reads KRSPIITVMG…MILLSSEILE (168 aa). The tract at residues 196-203 is G1; that stretch reads GHVDHGKT. Residue 196–203 coordinates GTP; the sequence is GHVDHGKT. Positions 221–225 are G2; it reads GITQH. The segment at 242-245 is G3; sequence DTPG. GTP is bound by residues 242–246 and 296–299; these read DTPGH and NKID. A G4 region spans residues 296–299; sequence NKID. Residues 332–334 are G5; it reads SAH.

This sequence belongs to the TRAFAC class translation factor GTPase superfamily. Classic translation factor GTPase family. IF-2 subfamily.

Its subcellular location is the cytoplasm. Functionally, one of the essential components for the initiation of protein synthesis. Protects formylmethionyl-tRNA from spontaneous hydrolysis and promotes its binding to the 30S ribosomal subunits. Also involved in the hydrolysis of GTP during the formation of the 70S ribosomal complex. This is Translation initiation factor IF-2 from Clostridium botulinum (strain 657 / Type Ba4).